We begin with the raw amino-acid sequence, 238 residues long: Large ribosomal subunit protein uL1 (238 aa).

Belongs to the universal ribosomal protein uL1 family. Part of the 50S ribosomal subunit.

Functionally, binds directly to 23S rRNA. The L1 stalk is quite mobile in the ribosome, and is involved in E site tRNA release. In terms of biological role, protein L1 is also a translational repressor protein, it controls the translation of the L11 operon by binding to its mRNA. In Beutenbergia cavernae (strain ATCC BAA-8 / DSM 12333 / CCUG 43141 / JCM 11478 / NBRC 16432 / NCIMB 13614 / HKI 0122), this protein is Large ribosomal subunit protein uL1.